The following is a 1367-amino-acid chain: Flocculation protein FLO11 (1367 aa).

Residues 1–21 (MQRPFLLAYLVLSLLFNSALG) form the signal peptide. Positions 31–207 (SSEGTSCNSI…NIDCDNNCGG (177 aa)) constitute a Flo11 domain. Intrachain disulfides connect Cys-37–Cys-201, Cys-44–Cys-179, and Cys-141–Cys-205. Positions 209 to 267 (KSSTTTSSTSESSTTTSSTSESSTTTSSTSESSTTTSSTSESSTSSSTTAPATPTTTSC) are enriched in low complexity. Disordered stretches follow at residues 209-975 (KSST…TTSV) and 1008-1032 (TTTV…PTTP). Tandem repeats lie at residues 210–219 (SSTTTSSTSE), 220–229 (SSTTTSSTSE), 230–239 (SSTTTSSTSE), 240–249 (SSTTTSSTSE), 262–274 (PTTT…KPTP), 275–287 (PTTT…KPTP), 313–327 (PVPT…SSSA), 328–342 (PVPT…SSSA), 343–354 (PVTSSTTESSSA), 355–369 (PVPT…SSSA), 370–381 (PVTSSTTESSSA), 382–393 (PVTSSTTESSSA), 394–408 (PVPT…SSSA), 409–420 (PVTSSTTESSSA), 421–432 (PVTSSTTESSSA), 433–444 (PVTSSTTESSSA), 445–456 (PVTSSTTESSSA), 457–471 (PVPT…SSSA), 472–483 (PVTSSTTESSSA), 484–498 (PVPT…SSSA), 499–510 (PVTSSTTESSSA), 511–525 (PVPT…SSSA), 526–540 (PAPT…SSSA), 541–552 (PVTSSTTESSSA), 568–579 (PVTSSTTESSSA), 580–594 (PVPT…SSSA), 595–609 (PVPT…SSSA), 610–624 (PAPT…SSSA), 625–636 (PVTSSTTESSSA), 637–651 (PVPT…SSSA), 652–666 (PVPT…SSSA), 667–681 (PVPT…SSSA), 682–693 (PVTSSTTESSSA), 694–705 (PVTSSTTESSSA), 706–720 (PVPT…SSSA), 721–735 (PVPT…SSSA), 736–750 (PVPT…SSSA), 751–762 (PVTSSTTESSSA), 763–777 (PVPT…SSSA), 778–792 (PVPT…SSSA), 808–822 (PVPT…TSSA), 838–852 (PVPT…SSSA), 865–879 (PVPT…TSSA), 937–968 (TTIT…TTVP), and 981–1012 (TTIT…TTVP). The 4 X 10 AA repeats, Ser/Thr-rich stretch occupies residues 210-249 (SSTTTSSTSESSTTTSSTSESSTTTSSTSESSTTTSSTSE). A 2 X 13 AA repeats, Thr-rich region spans residues 262–287 (PTTTSCTKEKPTPPTTTSCTKEKPTP). A compositionally biased stretch (basic and acidic residues) spans 281–292 (TKEKPTPPHHDT). Composition is skewed to low complexity over residues 302 to 900 (TSKT…TVTP) and 910 to 948 (TETS…STGT). The segment at 313–852 (PVPTPSSSTT…SSSTTESSSA (540 aa)) is 22 X 15 AA approximate repeats, Ser-rich. Residues 343–762 (PVTSSTTESS…TSSTTESSSA (420 aa)) form a 15 X 12 AA repeats, Ser/Thr-rich region. N-linked (GlcNAc...) asparagine glycosylation is present at Asn-817. The N-linked (GlcNAc...) asparagine glycan is linked to Asn-874. Residues 937 to 1119 (TTITTTVCST…SPKTVTTTVP (183 aa)) are 3 X 32 AA tandem repeats, Thr-rich. A compositionally biased stretch (polar residues) spans 949–961 (NSAGETTSGCSPK). Over residues 962 to 975 (TVTTTVPTTTTTSV) the composition is skewed to low complexity. Residues 1014-1032 (STSPSETASESTTTSPTTP) are compositionally biased toward low complexity. Residues 1088–1119 (TTITTTVCSTGTNSAGETTSGCSPKTVTTTVP) form a 5-3 repeat. Residue Gly-1346 is the site of GPI-anchor amidated glycine attachment. A propeptide spans 1347 to 1367 (AANIKVLGNFMWLLLALPVVF) (removed in mature form).

This sequence belongs to the flocculin family. Highly divergent. Post-translationally, extensively O-mannosylated. The GPI-anchor is attached to the protein in the endoplasmic reticulum and serves to target the protein to the cell surface. There, the glucosamine-inositol phospholipid moiety is cleaved off and the GPI-modified mannoprotein is covalently attached via its lipidless GPI glycan remnant to the 1,6-beta-glucan of the outer cell wall layer. In terms of processing, a soluble form is probably produced by proteolytic cleavage at the cell surface (shedding).

It is found in the secreted. The protein resides in the cell wall. It localises to the membrane. In terms of biological role, homophilic binding protein that enables kin discrimination in heterogeneous yeast populations by mediating homotypic cell-cell interactions during flocculation, a reversible and asexual process in which cells adhere to form aggregates (flocs). Plays a role in cell-substrate adhesion, haploid invasive growth, diploid pseudohyphae formation and biofilm (flor) development. Adhesive activity is inhibited by mannose, but not by glucose, maltose, sucrose or galactose. This chain is Flocculation protein FLO11, found in Saccharomyces cerevisiae (strain ATCC 204508 / S288c) (Baker's yeast).